Here is a 350-residue protein sequence, read N- to C-terminus: Biotin synthase (350 aa).

Residues 54-278 (REIQLSTLLS…TMPQSYVRLS (225 aa)) form the Radical SAM core domain. Positions 69, 73, and 76 each coordinate [4Fe-4S] cluster. [2Fe-2S] cluster-binding residues include Cys-113, Cys-144, Cys-204, and Arg-276.

Belongs to the radical SAM superfamily. Biotin synthase family. Homodimer. [4Fe-4S] cluster serves as cofactor. It depends on [2Fe-2S] cluster as a cofactor.

It carries out the reaction (4R,5S)-dethiobiotin + (sulfur carrier)-SH + 2 reduced [2Fe-2S]-[ferredoxin] + 2 S-adenosyl-L-methionine = (sulfur carrier)-H + biotin + 2 5'-deoxyadenosine + 2 L-methionine + 2 oxidized [2Fe-2S]-[ferredoxin]. The protein operates within cofactor biosynthesis; biotin biosynthesis; biotin from 7,8-diaminononanoate: step 2/2. Its function is as follows. Catalyzes the conversion of dethiobiotin (DTB) to biotin by the insertion of a sulfur atom into dethiobiotin via a radical-based mechanism. The sequence is that of Biotin synthase from Neisseria meningitidis serogroup B (strain ATCC BAA-335 / MC58).